Here is a 547-residue protein sequence, read N- to C-terminus: Inositol-tetrakisphosphate 1-kinase 6 (547 aa).

Lys263 is a binding site for 1D-myo-inositol 1,3,4-trisphosphate. ATP contacts are provided by Arg317 and Lys370. One can recognise an ATP-grasp domain in the interval Leu327 to Glu539. 1D-myo-inositol 1,3,4-trisphosphate contacts are provided by His381 and Lys415. ATP contacts are provided by residues Gln404 to Lys415, Ser430, and Ser450. Mg(2+) is bound by residues Asp497, Asp511, and Asn513. 1D-myo-inositol 1,3,4-trisphosphate contacts are provided by Asn513 and Ser517.

It belongs to the ITPK1 family. As to quaternary structure, monomer. The cofactor is Mg(2+). As to expression, highly expressed in embryos and at lower levels in roots, leaves, flowers and anthers.

The enzyme catalyses 1D-myo-inositol 3,4,5,6-tetrakisphosphate + ATP = 1D-myo-inositol 1,3,4,5,6-pentakisphosphate + ADP + H(+). It catalyses the reaction 1D-myo-inositol 1,3,4-trisphosphate + ATP = 1D-myo-inositol 1,3,4,5-tetrakisphosphate + ADP + H(+). It carries out the reaction 1D-myo-inositol 1,3,4-trisphosphate + ATP = 1D-myo-inositol 1,3,4,6-tetrakisphosphate + ADP + H(+). Its function is as follows. Kinase that can phosphorylate various inositol polyphosphate such as Ins(3,4,5,6)P4 or Ins(1,3,4)P3 and participates in phytic acid biosynthesis in developing seeds. Phytic acid is the primary storage form of phosphorus in cereal grains and other plant seeds. This is Inositol-tetrakisphosphate 1-kinase 6 (ITPK6) from Oryza sativa subsp. japonica (Rice).